Consider the following 337-residue polypeptide: Quinolinate synthase (337 aa).

The iminosuccinate site is built by His40 and Ser57. Residue Cys102 coordinates [4Fe-4S] cluster. Residues 128-130 (YVN) and Ser145 each bind iminosuccinate. A [4Fe-4S] cluster-binding site is contributed by Cys189. Iminosuccinate contacts are provided by residues 215 to 217 (HPE) and Thr243. Cys288 is a [4Fe-4S] cluster binding site.

This sequence belongs to the quinolinate synthase family. Type 2 subfamily. [4Fe-4S] cluster is required as a cofactor.

It localises to the cytoplasm. The catalysed reaction is iminosuccinate + dihydroxyacetone phosphate = quinolinate + phosphate + 2 H2O + H(+). Its pathway is cofactor biosynthesis; NAD(+) biosynthesis; quinolinate from iminoaspartate: step 1/1. Functionally, catalyzes the condensation of iminoaspartate with dihydroxyacetone phosphate to form quinolinate. This is Quinolinate synthase from Mycobacterium sp. (strain JLS).